A 252-amino-acid polypeptide reads, in one-letter code: Carbohydrate deacetylase (252 aa).

The Mg(2+) site is built by H59 and H122.

The protein belongs to the YdjC deacetylase family. Homodimer. It depends on Mg(2+) as a cofactor.

In terms of biological role, probably catalyzes the deacetylation of acetylated carbohydrates an important step in the degradation of oligosaccharides. In Vibrio cholerae serotype O1 (strain ATCC 39541 / Classical Ogawa 395 / O395), this protein is Carbohydrate deacetylase.